Consider the following 213-residue polypeptide: MNIFRISADMSHLLAIIILLLKIWKSRSCSGISARSQILFALVFTARYLDLFSTYISLYNTTMKITFLAATYATVYLMFFKFRSTYMRESDTFRVELLIVPAAILALLINHDFAPFELLWTFSIYLEAVAILPQLFLLQSTGSAEVITAHYLFALGSYRALYIFNWIYRYYTEDYFDPIVVVAGIVQTVLYADFFYLYVTRVVQTRKGMELPI.

Residues 1-2 (MN) are Lumenal-facing. A helical transmembrane segment spans residues 3–21 (IFRISADMSHLLAIIILLL). Over 22–35 (KIWKSRSCSGISAR) the chain is Cytoplasmic. The helical transmembrane segment at 36–53 (SQILFALVFTARYLDLFS) threads the bilayer. Residues 54-61 (TYISLYNT) are Lumenal-facing. The helical transmembrane segment at 62-80 (TMKITFLAATYATVYLMFF) threads the bilayer. The Cytoplasmic portion of the chain corresponds to 81–96 (KFRSTYMRESDTFRVE). A helical membrane pass occupies residues 97-110 (LLIVPAAILALLIN). The Lumenal segment spans residues 111 to 117 (HDFAPFE). A helical transmembrane segment spans residues 118–137 (LLWTFSIYLEAVAILPQLFL). Residues 138–149 (LQSTGSAEVITA) are Cytoplasmic-facing. A helical membrane pass occupies residues 150 to 168 (HYLFALGSYRALYIFNWIY). At 169 to 178 (RYYTEDYFDP) the chain is on the lumenal side. Residues 179-199 (IVVVAGIVQTVLYADFFYLYV) form a helical membrane-spanning segment. Over 200–213 (TRVVQTRKGMELPI) the chain is Cytoplasmic.

It belongs to the ERD2 family.

Its subcellular location is the endoplasmic reticulum membrane. In terms of biological role, required for the retention of luminal endoplasmic reticulum proteins. Determines the specificity of the luminal ER protein retention system. Also required for normal vesicular traffic through the Golgi. This chain is ER lumen protein-retaining receptor erd-2.2, found in Caenorhabditis elegans.